The chain runs to 421 residues: Gamma-glutamyl phosphate reductase (421 aa).

It belongs to the gamma-glutamyl phosphate reductase family.

Its subcellular location is the cytoplasm. The catalysed reaction is L-glutamate 5-semialdehyde + phosphate + NADP(+) = L-glutamyl 5-phosphate + NADPH + H(+). It functions in the pathway amino-acid biosynthesis; L-proline biosynthesis; L-glutamate 5-semialdehyde from L-glutamate: step 2/2. In terms of biological role, catalyzes the NADPH-dependent reduction of L-glutamate 5-phosphate into L-glutamate 5-semialdehyde and phosphate. The product spontaneously undergoes cyclization to form 1-pyrroline-5-carboxylate. The protein is Gamma-glutamyl phosphate reductase of Leptospira biflexa serovar Patoc (strain Patoc 1 / ATCC 23582 / Paris).